A 269-amino-acid chain; its full sequence is MVRIAIAGAAGRMGRNLVKATHQNPLSELGAGSERPESSLVGVDIGELCGIGKQGIVLVDNLEQAVEQFDVIIDFTAPASTLANLALCEQHGKKLVIGTTGFTDAQRQTIEQAAKKIPIVMAPNYSVGVNLVFKLLEKAAKVMGDYCDIEIIEAHHRHKVDAPSGTAIGMGEAIAHAMGNQLSDVAVYAREGITGERSRNEIGFATIRAGDIIGEHTAMFADIGERVEITHKATDRMTFANGAVKAAIWLAEQPAGFYTMTDVLGLNDL.

Residues 8-13 (GAAGRM) and E34 contribute to the NAD(+) site. R35 lines the NADP(+) pocket. NAD(+)-binding positions include 98 to 100 (GTT) and 122 to 125 (APNY). The Proton donor/acceptor role is filled by H155. Residue H156 coordinates (S)-2,3,4,5-tetrahydrodipicolinate. Catalysis depends on K159, which acts as the Proton donor. (S)-2,3,4,5-tetrahydrodipicolinate is bound at residue 165–166 (GT).

The protein belongs to the DapB family.

The protein localises to the cytoplasm. It catalyses the reaction (S)-2,3,4,5-tetrahydrodipicolinate + NAD(+) + H2O = (2S,4S)-4-hydroxy-2,3,4,5-tetrahydrodipicolinate + NADH + H(+). The catalysed reaction is (S)-2,3,4,5-tetrahydrodipicolinate + NADP(+) + H2O = (2S,4S)-4-hydroxy-2,3,4,5-tetrahydrodipicolinate + NADPH + H(+). Its pathway is amino-acid biosynthesis; L-lysine biosynthesis via DAP pathway; (S)-tetrahydrodipicolinate from L-aspartate: step 4/4. Functionally, catalyzes the conversion of 4-hydroxy-tetrahydrodipicolinate (HTPA) to tetrahydrodipicolinate. The protein is 4-hydroxy-tetrahydrodipicolinate reductase of Vibrio cholerae serotype O1 (strain ATCC 39541 / Classical Ogawa 395 / O395).